The sequence spans 1974 residues: Protein Ycf2 (1974 aa).

The segment at 219 to 246 (SQLKGSSYQSRDHLDSISNEDSEYHNQR) is disordered. An ATP-binding site is contributed by 1308–1315 (GSIGTGRS).

It belongs to the Ycf2 family.

Its subcellular location is the plastid. The protein resides in the chloroplast stroma. Probable ATPase of unknown function. Its presence in a non-photosynthetic plant (Epifagus virginiana) and experiments in tobacco indicate that it has an essential function which is probably not related to photosynthesis. The sequence is that of Protein Ycf2 from Jasminum nudiflorum (Winter jasmine).